The sequence spans 265 residues: 6-oxopurine nucleoside phosphorylase (265 aa).

Phosphate contacts are provided by residues Ser-10, 49 to 50 (RH), and 82 to 83 (SA). 2 cysteine pairs are disulfide-bonded: Cys-136-Cys-202 and Cys-162-Cys-190. Met-187 lines the substrate pocket. Position 188 (Thr-188) interacts with phosphate. Residue 211–213 (NYA) participates in substrate binding. A disulfide bridge links Cys-254 with Cys-256.

It belongs to the PNP/MTAP phosphorylase family. MTAP subfamily. Homohexamer. Dimer of a homotrimer.

The enzyme catalyses a purine D-ribonucleoside + phosphate = a purine nucleobase + alpha-D-ribose 1-phosphate. The catalysed reaction is guanosine + phosphate = alpha-D-ribose 1-phosphate + guanine. It catalyses the reaction inosine + phosphate = alpha-D-ribose 1-phosphate + hypoxanthine. Its pathway is purine metabolism; purine nucleoside salvage. Its function is as follows. Purine nucleoside phosphorylase which is highly specific for 6-oxopurine nucleosides. Cleaves guanosine or inosine to respective bases and sugar-1-phosphate molecules. Involved in purine salvage. The sequence is that of 6-oxopurine nucleoside phosphorylase from Pyrococcus furiosus (strain ATCC 43587 / DSM 3638 / JCM 8422 / Vc1).